The chain runs to 372 residues: Fatty acid conjugase FAC2 B (372 aa).

2 consecutive transmembrane segments (helical) span residues 44–64 (YFLF…SNYI) and 74–94 (IVWP…WMIG). The Histidine box-1 motif lies at 95-99 (HECGH). The Histidine box-2 signature appears at 131 to 135 (HRNHH). 3 helical membrane passes run 166-186 (IGLM…YIMF), 217-237 (VLFS…IVTV), and 240-260 (AMPA…ILFA). Positions 304–308 (HVIHH) match the Histidine box-3 motif.

The protein belongs to the fatty acid desaturase type 1 family. Expressed exclusively in the developing seeds. Not detected in leaves.

It localises to the microsome membrane. The enzyme catalyses a (9Z,12Z)-octadecadienoyl-containing glycerolipid + AH2 + O2 = a (8E,10E,12Z)-octadecatrienoyl-containing glycerolipid + A + 2 H2O. It functions in the pathway lipid metabolism; polyunsaturated fatty acid biosynthesis. Functionally, fatty acid conjugase converting 18:2(9Z, 12Z) to calendic acid 18:3(8E, 10E, 12Z). Converts alpha-linolenic acid (18:3(9Z, 12Z, 15Z)) into 18:4(8E, 10E, 12Z, 15Z). Also has weak activity on the mono-unsaturates 16:1(9Z) and 18:1(9Z) producing two conjugated double bonds at delta(8) and delta(10) position. The chain is Fatty acid conjugase FAC2 B from Calendula officinalis (Pot marigold).